The primary structure comprises 168 residues: Photosystem I assembly protein Ycf3 (168 aa).

TPR repeat units lie at residues 35-68 (AFTYYRDGMSAQSEGNYAEALQNYYEATRPEIDP), 72-105 (SYILYNIGLIHTSNGEHTKALEYYFRALERNPFL), and 120-153 (GEQAIRQGDSEIAEAWSDQAAEYWKQAIALTPGN).

It belongs to the Ycf3 family.

Its subcellular location is the plastid. The protein resides in the chloroplast thylakoid membrane. Functionally, essential for the assembly of the photosystem I (PSI) complex. May act as a chaperone-like factor to guide the assembly of the PSI subunits. In Liriodendron tulipifera (Tuliptree), this protein is Photosystem I assembly protein Ycf3.